The chain runs to 124 residues: Small ribosomal subunit protein bS16 (124 aa).

The segment at 82-124 (LAKRPARSNPTKAVPGKKAQERAAEAKQKAEDAAAAAAESAAE) is disordered. The segment covering 99–113 (KAQERAAEAKQKAED) has biased composition (basic and acidic residues). The segment covering 114–124 (AAAAAAESAAE) has biased composition (low complexity).

The protein belongs to the bacterial ribosomal protein bS16 family.

In Sinorhizobium fredii (strain NBRC 101917 / NGR234), this protein is Small ribosomal subunit protein bS16.